Consider the following 784-residue polypeptide: Replication protein A 70 kDa DNA-binding subunit E (784 aa).

The tract at residues 114–224 (HPVPGGKHND…NRGPVARNEA (111 aa)) is disordered. 2 stretches are compositionally biased toward polar residues: residues 132-148 (KFNT…QVNN) and 167-190 (SSVP…NGVT). The segment at residues 241 to 327 (WTIKARVTNK…RNDYEIMLDN (87 aa)) is a DNA-binding region (OB). The C4-type zinc-finger motif lies at 532 to 558 (CPIMNGDRPCSKKVTDNGDGTWRCEKC). Disordered stretches follow at residues 678 to 707 (LPIN…PSSV) and 746 to 784 (AKCP…VGSY). Polar residues predominate over residues 695–707 (GIGSSGTRDPSSV). Residues 760 to 776 (YMGGSYRGTTGSYGGGL) are compositionally biased toward gly residues.

This sequence belongs to the replication factor A protein 1 family. In terms of assembly, heterotrimer of RPA1, RPA2 and RPA3 (canonical replication protein A complex).

It is found in the nucleus. Functionally, component of the replication protein A complex (RPA) required for DNA recombination, repair and replication. The activity of RPA is mediated by single-stranded DNA binding and protein interactions. Probably involved in repair of double-strand DNA breaks (DSBs) induced by genotoxic stresses. This chain is Replication protein A 70 kDa DNA-binding subunit E (RPA1E), found in Arabidopsis thaliana (Mouse-ear cress).